The primary structure comprises 278 residues: Malonyl-[acyl-carrier protein] O-methyltransferase (278 aa).

This sequence belongs to the methyltransferase superfamily.

It carries out the reaction malonyl-[ACP] + S-adenosyl-L-methionine = malonyl-[ACP] methyl ester + S-adenosyl-L-homocysteine. It functions in the pathway cofactor biosynthesis; biotin biosynthesis. Functionally, converts the free carboxyl group of a malonyl-thioester to its methyl ester by transfer of a methyl group from S-adenosyl-L-methionine (SAM). It allows to synthesize pimeloyl-ACP via the fatty acid synthetic pathway. This is Malonyl-[acyl-carrier protein] O-methyltransferase from Brevibacillus brevis (strain 47 / JCM 6285 / NBRC 100599).